We begin with the raw amino-acid sequence, 208 residues long: Small ribosomal subunit protein uS4 (208 aa).

Positions C98 to A160 constitute an S4 RNA-binding domain.

Belongs to the universal ribosomal protein uS4 family. Part of the 30S ribosomal subunit. Contacts protein S5. The interaction surface between S4 and S5 is involved in control of translational fidelity.

In terms of biological role, one of the primary rRNA binding proteins, it binds directly to 16S rRNA where it nucleates assembly of the body of the 30S subunit. Its function is as follows. With S5 and S12 plays an important role in translational accuracy. This chain is Small ribosomal subunit protein uS4, found in Vesicomyosocius okutanii subsp. Calyptogena okutanii (strain HA).